The primary structure comprises 209 residues: Uracil phosphoribosyltransferase (209 aa).

Residues R79, R104, and 131–139 each bind 5-phospho-alpha-D-ribose 1-diphosphate; that span reads DPMLATGNS. Uracil contacts are provided by residues I194 and 199 to 201; that span reads GDA. D200 is a binding site for 5-phospho-alpha-D-ribose 1-diphosphate.

It belongs to the UPRTase family. Mg(2+) serves as cofactor.

The catalysed reaction is UMP + diphosphate = 5-phospho-alpha-D-ribose 1-diphosphate + uracil. Its pathway is pyrimidine metabolism; UMP biosynthesis via salvage pathway; UMP from uracil: step 1/1. With respect to regulation, allosterically activated by GTP. Functionally, catalyzes the conversion of uracil and 5-phospho-alpha-D-ribose 1-diphosphate (PRPP) to UMP and diphosphate. The chain is Uracil phosphoribosyltransferase from Acidovorax sp. (strain JS42).